Here is a 404-residue protein sequence, read N- to C-terminus: NADH-quinone oxidoreductase subunit D 2 (404 aa).

The protein belongs to the complex I 49 kDa subunit family. NDH-1 is composed of 14 different subunits. Subunits NuoB, C, D, E, F, and G constitute the peripheral sector of the complex.

It localises to the cell inner membrane. It catalyses the reaction a quinone + NADH + 5 H(+)(in) = a quinol + NAD(+) + 4 H(+)(out). Its function is as follows. NDH-1 shuttles electrons from NADH, via FMN and iron-sulfur (Fe-S) centers, to quinones in the respiratory chain. The immediate electron acceptor for the enzyme in this species is believed to be ubiquinone. Couples the redox reaction to proton translocation (for every two electrons transferred, four hydrogen ions are translocated across the cytoplasmic membrane), and thus conserves the redox energy in a proton gradient. This is NADH-quinone oxidoreductase subunit D 2 from Rhizobium etli (strain ATCC 51251 / DSM 11541 / JCM 21823 / NBRC 15573 / CFN 42).